The sequence spans 312 residues: DNA-directed RNA polymerase subunit alpha (312 aa).

Residues 1 to 229 are alpha N-terminal domain (alpha-NTD); it reads MLQYQIDRID…ELFQPLATVT (229 aa). Residues 240–312 are alpha C-terminal domain (alpha-CTD); the sequence is PSPEAQIPLE…ISIPQSRTSV (73 aa).

Belongs to the RNA polymerase alpha chain family. In cyanobacteria the RNAP catalytic core is composed of 2 alpha, 1 beta, 1 beta', 1 gamma and 1 omega subunit. When a sigma factor is associated with the core the holoenzyme is formed, which can initiate transcription.

The catalysed reaction is RNA(n) + a ribonucleoside 5'-triphosphate = RNA(n+1) + diphosphate. DNA-dependent RNA polymerase catalyzes the transcription of DNA into RNA using the four ribonucleoside triphosphates as substrates. The chain is DNA-directed RNA polymerase subunit alpha from Prochlorococcus marinus (strain AS9601).